We begin with the raw amino-acid sequence, 223 residues long: Golgi SNAP receptor complex member 1-1 (223 aa).

Residues 1–201 lie on the Cytoplasmic side of the membrane; sequence MDVPSSWDAL…AAIKRKKSMD (201 aa). Residues 8–67 are a coiled coil; that stretch reads DALRKQARKIEAQLDEQMHSYRRLVSTKALSKSDGNESDLEAGIDLLLRQLQQVNAQMQA. A helical; Anchor for type IV membrane protein transmembrane segment spans residues 202–222; sequence TIILSLVAAVCTFLIFIYWIT. Residue Lys223 is a topological domain, vesicular.

Belongs to the GOSR1 family. Component of several multiprotein Golgi SNARE complexes.

It is found in the golgi apparatus membrane. In terms of biological role, involved in transport from the ER to the Golgi apparatus as well as in intra-Golgi transport. It belongs to a super-family of proteins called t-SNAREs or soluble NSF (N-ethylmaleimide-sensitive factor) attachment protein receptor. The sequence is that of Golgi SNAP receptor complex member 1-1 (GOS11) from Arabidopsis thaliana (Mouse-ear cress).